Here is a 273-residue protein sequence, read N- to C-terminus: Chondrolectin (273 aa).

Residues 1 to 21 (MSRVVSLLLGAALLCGHGAFC) form the signal peptide. The Extracellular portion of the chain corresponds to 22-216 (RRVVSGQKVC…VVTEAGIIPN (195 aa)). A C-type lectin domain is found at 35–179 (FKHPCYKMAY…CNMKHNYICK (145 aa)). 2 cysteine pairs are disulfide-bonded: C61–C178 and C144–C170. The N-linked (GlcNAc...) asparagine glycan is linked to N86. A helical transmembrane segment spans residues 217 to 237 (LIYVVIPTIPLLLLILVAFGT). Residues 238-273 (CCFQMLHKSKGRTKTSPNQSTLWISKSTRKESGMEV) are Cytoplasmic-facing. The interval 248–273 (GRTKTSPNQSTLWISKSTRKESGMEV) is disordered. The span at 251–263 (KTSPNQSTLWISK) shows a compositional bias: polar residues.

As to quaternary structure, interacts with RABGGTB. Post-translationally, N-glycosylated. Found in spleen, testis, prostate and fetal liver. Expression limited to vascular muscle of testis, smooth muscle of prostate stroma, heart muscle, skeletal muscle, crypts of small intestine, and red pulp of spleen. B lymphocytes express isoform 2 only; peripheral blood T lymphocytes express isoform 3 only; granulocytes and monocytes express neither isoform 2 nor isoform 3. During development of T lymphocytes, bone marrow progenitor cells express isoform 2 only; thymocytes at different stages of maturation express predominantly isoform 2 and weakly isoform 3, and mature thymocytes express only isoform 2.

The protein resides in the cytoplasm. It is found in the membrane. The protein localises to the endoplasmic reticulum. It localises to the endoplasmic reticulum membrane. Its function is as follows. May play a role in the development of the nervous system such as in neurite outgrowth and elongation. May be involved in motor axon growth and guidance. The chain is Chondrolectin (CHODL) from Homo sapiens (Human).